The sequence spans 187 residues: UPF0301 protein YE3428 (187 aa).

Belongs to the UPF0301 (AlgH) family.

The polypeptide is UPF0301 protein YE3428 (Yersinia enterocolitica serotype O:8 / biotype 1B (strain NCTC 13174 / 8081)).